Here is a 714-residue protein sequence, read N- to C-terminus: Epithelial splicing regulatory protein 1 (714 aa).

RRM domains follow at residues 225–302, 326–406, and 450–530; these read TVIR…KATG, IIVR…KSTA, and DCVR…ACSA.

This sequence belongs to the ESRP family.

The protein localises to the nucleus. Functionally, mRNA splicing factor that regulates the formation of epithelial cell-specific isoforms. Specifically regulates the expression of FGFR2-IIIb, an epithelial cell-specific isoform of fgfr2. Acts by directly binding specific sequences in mRNAs. Binds the GU-rich sequence motifs in the ISE/ISS-3, a cis-element regulatory region present in the mRNA of fgfr2. The chain is Epithelial splicing regulatory protein 1 (esrp1) from Danio rerio (Zebrafish).